The primary structure comprises 105 residues: MFAVIKAGGKQYKVDRNSVIKVEKIDGELGSKIQFDQILMIGEYSKPSFIGTPIVKGAVVTAEITNQLKDNKIIVFKKKRRKNYRRKAGHRQELTELKILDITKQ.

Belongs to the bacterial ribosomal protein bL21 family. Part of the 50S ribosomal subunit. Contacts protein L20.

This protein binds to 23S rRNA in the presence of protein L20. The polypeptide is Large ribosomal subunit protein bL21 (Rickettsia canadensis (strain McKiel)).